The primary structure comprises 432 residues: Glutamyl-tRNA reductase (432 aa).

Substrate-binding positions include 55–58, Ser114, 119–121, and Gln125; these read TCNR and ETQ. Catalysis depends on Cys56, which acts as the Nucleophile. Residue 194 to 199 participates in NADP(+) binding; the sequence is GAGEMI.

This sequence belongs to the glutamyl-tRNA reductase family. As to quaternary structure, homodimer.

It carries out the reaction (S)-4-amino-5-oxopentanoate + tRNA(Glu) + NADP(+) = L-glutamyl-tRNA(Glu) + NADPH + H(+). Its pathway is porphyrin-containing compound metabolism; protoporphyrin-IX biosynthesis; 5-aminolevulinate from L-glutamyl-tRNA(Glu): step 1/2. In terms of biological role, catalyzes the NADPH-dependent reduction of glutamyl-tRNA(Glu) to glutamate 1-semialdehyde (GSA). This Burkholderia orbicola (strain MC0-3) protein is Glutamyl-tRNA reductase.